A 431-amino-acid polypeptide reads, in one-letter code: SPI-1 type 3 secretion system ATPase (431 aa).

162–167 (GCGKTM) is a binding site for ATP.

This sequence belongs to the ATPase alpha/beta chains family. T3SS ATPase subfamily. As to quaternary structure, the core secretion machinery of the T3SS is composed of approximately 20 different proteins, including cytoplasmic components, a base, an export apparatus and a needle. This subunit is part of the cytosolic complex. Forms homohexamers.

The protein localises to the cytoplasm. It catalyses the reaction ATP + H2O + cellular proteinSide 1 = ADP + phosphate + cellular proteinSide 2.. Functionally, ATPase component of the type III secretion system (T3SS), also called injectisome, which is used to inject bacterial effector proteins into eukaryotic host cells. Acts as a molecular motor to provide the energy that is required for the export of proteins. Required for type III secretion apparatus (T3SA) formation, proper protein secretion, host cell invasion and virulence. May play a critical role in T3SS substrate recognition, disassembly of the effector/chaperone complex and unfolding of the effector in an ATP-dependent manner prior to secretion. The polypeptide is SPI-1 type 3 secretion system ATPase (Salmonella typhi).